Here is a 418-residue protein sequence, read N- to C-terminus: UDP-N-acetylglucosamine 1-carboxyvinyltransferase (418 aa).

22 to 23 serves as a coordination point for phosphoenolpyruvate; that stretch reads KN. A UDP-N-acetyl-alpha-D-glucosamine-binding site is contributed by R93. The active-site Proton donor is C117. C117 is modified (2-(S-cysteinyl)pyruvic acid O-phosphothioketal). Positions 306 and 328 each coordinate UDP-N-acetyl-alpha-D-glucosamine.

This sequence belongs to the EPSP synthase family. MurA subfamily.

The protein resides in the cytoplasm. The catalysed reaction is phosphoenolpyruvate + UDP-N-acetyl-alpha-D-glucosamine = UDP-N-acetyl-3-O-(1-carboxyvinyl)-alpha-D-glucosamine + phosphate. Its pathway is cell wall biogenesis; peptidoglycan biosynthesis. In terms of biological role, cell wall formation. Adds enolpyruvyl to UDP-N-acetylglucosamine. This is UDP-N-acetylglucosamine 1-carboxyvinyltransferase from Hydrogenovibrio crunogenus (strain DSM 25203 / XCL-2) (Thiomicrospira crunogena).